The primary structure comprises 219 residues: Membrin-12 (219 aa).

At Ala2 the chain carries N-acetylalanine. The Cytoplasmic portion of the chain corresponds to 2–197 (ASGTVGGLSE…LIERRNRVDT (196 aa)). A helical; Anchor for type IV membrane protein membrane pass occupies residues 198 to 215 (WIKYAGMIATLVILYLFI). Over 216 to 219 (RWTR) the chain is Vesicular.

Belongs to the GOSR2 family.

Its subcellular location is the golgi apparatus membrane. Its function is as follows. Involved in transport of proteins from the cis/medial-Golgi to the trans-Golgi network. This chain is Membrin-12 (MEMB12), found in Arabidopsis thaliana (Mouse-ear cress).